The following is a 288-amino-acid chain: Nucleotide-binding protein APP7_0339 (288 aa).

Residue G8–S15 participates in ATP binding. D56–N59 is a binding site for GTP.

Belongs to the RapZ-like family.

Functionally, displays ATPase and GTPase activities. This Actinobacillus pleuropneumoniae serotype 7 (strain AP76) protein is Nucleotide-binding protein APP7_0339.